A 475-amino-acid polypeptide reads, in one-letter code: ATP synthase subunit beta 1 (475 aa).

152–159 is a binding site for ATP; it reads GGAGVGKT.

Belongs to the ATPase alpha/beta chains family. In terms of assembly, F-type ATPases have 2 components, CF(1) - the catalytic core - and CF(0) - the membrane proton channel. CF(1) has five subunits: alpha(3), beta(3), gamma(1), delta(1), epsilon(1). CF(0) has four main subunits: a(1), b(1), b'(1) and c(9-12).

It is found in the cell inner membrane. It carries out the reaction ATP + H2O + 4 H(+)(in) = ADP + phosphate + 5 H(+)(out). Its function is as follows. Produces ATP from ADP in the presence of a proton gradient across the membrane. The catalytic sites are hosted primarily by the beta subunits. This chain is ATP synthase subunit beta 1, found in Cereibacter sphaeroides (strain ATCC 17029 / ATH 2.4.9) (Rhodobacter sphaeroides).